We begin with the raw amino-acid sequence, 569 residues long: Phospholipase B-like protein D (569 aa).

The signal sequence occupies residues 1–22 (MIIFKNLLKLLIILLTIKLYFC). 5 N-linked (GlcNAc...) asparagine glycosylation sites follow: Asn93, Asn126, Asn181, Asn425, and Asn430.

The protein belongs to the phospholipase B-like family.

Its subcellular location is the secreted. Its function is as follows. Probable phospholipase. The chain is Phospholipase B-like protein D (plbD) from Dictyostelium discoideum (Social amoeba).